We begin with the raw amino-acid sequence, 110 residues long: Ribonuclease P protein component 4 (110 aa).

Positions 65, 68, 94, and 97 each coordinate Zn(2+).

The protein belongs to the eukaryotic/archaeal RNase P protein component 4 family. In terms of assembly, consists of a catalytic RNA component and at least 4-5 protein subunits. Zn(2+) serves as cofactor.

Its subcellular location is the cytoplasm. The catalysed reaction is Endonucleolytic cleavage of RNA, removing 5'-extranucleotides from tRNA precursor.. In terms of biological role, part of ribonuclease P, a protein complex that generates mature tRNA molecules by cleaving their 5'-ends. The sequence is that of Ribonuclease P protein component 4 from Methanococcus maripaludis (strain C5 / ATCC BAA-1333).